Consider the following 104-residue polypeptide: Large ribosomal subunit protein uL24 (104 aa).

It belongs to the universal ribosomal protein uL24 family. As to quaternary structure, part of the 50S ribosomal subunit.

In terms of biological role, one of two assembly initiator proteins, it binds directly to the 5'-end of the 23S rRNA, where it nucleates assembly of the 50S subunit. Its function is as follows. One of the proteins that surrounds the polypeptide exit tunnel on the outside of the subunit. The chain is Large ribosomal subunit protein uL24 from Ectopseudomonas mendocina (strain ymp) (Pseudomonas mendocina).